Consider the following 389-residue polypeptide: MADTQTKLSKTFSNFFASEKTSGILLILCTILSLSIANSLAGPAYQGFWHAIVAGLSIEHWVNDALMAVFFLFVGLELERELYNGELSNFRNALLPIFAAIGGIGVPALIHYTLNVGTPTQAGTGIPMATDIAFALGVLALLGSRVPASLKVFLTALAVMDDLGAIIVIAMFYTQQFSLVYLLSALAVFGLLLVLNRIFRVMSLLPYLLGGALMWFLMLKSGVHATIAGVLLAFAIPFSAKADDEKSPSHRLEHFLHKPVAFIILPIFALANTGIVIGSEWQHELLTPNSLGIIGGLVFGKPLGIALLSFVTVAIGVCRLPDDLKWTHIVGAGILGGIGFTMSIFITNLAFTNNASIINASKMAILMASVAAGGLGFLWLSFFQQNDNQ.

A run of 11 helical transmembrane segments spans residues 24 to 44 (ILLI…AGPA), 56 to 76 (LSIE…FVGL), 94 to 114 (LLPI…HYTL), 122 to 142 (AGTG…LALL), 152 to 172 (VFLT…IAMF), 176 to 196 (QFSL…LVLN), 216 to 236 (FLML…AFAI), 259 to 279 (PVAF…VIGS), 291 to 311 (LGII…LSFV), 326 to 346 (WTHI…SIFI), and 363 to 383 (MAIL…LSFF).

This sequence belongs to the NhaA Na(+)/H(+) (TC 2.A.33) antiporter family.

Its subcellular location is the cell inner membrane. The catalysed reaction is Na(+)(in) + 2 H(+)(out) = Na(+)(out) + 2 H(+)(in). In terms of biological role, na(+)/H(+) antiporter that extrudes sodium in exchange for external protons. The sequence is that of Na(+)/H(+) antiporter NhaA from Dechloromonas aromatica (strain RCB).